Here is a 37-residue protein sequence, read N- to C-terminus: Large ribosomal subunit protein bL36c (37 aa).

The protein belongs to the bacterial ribosomal protein bL36 family.

It is found in the plastid. The protein localises to the chloroplast. This Tetradesmus obliquus (Green alga) protein is Large ribosomal subunit protein bL36c.